Reading from the N-terminus, the 217-residue chain is UPF0502 protein AHA_2872 (217 aa).

This sequence belongs to the UPF0502 family.

The sequence is that of UPF0502 protein AHA_2872 from Aeromonas hydrophila subsp. hydrophila (strain ATCC 7966 / DSM 30187 / BCRC 13018 / CCUG 14551 / JCM 1027 / KCTC 2358 / NCIMB 9240 / NCTC 8049).